The sequence spans 179 residues: Adenine phosphoribosyltransferase (179 aa).

Belongs to the purine/pyrimidine phosphoribosyltransferase family. In terms of assembly, homodimer.

The protein localises to the cytoplasm. The enzyme catalyses AMP + diphosphate = 5-phospho-alpha-D-ribose 1-diphosphate + adenine. Its pathway is purine metabolism; AMP biosynthesis via salvage pathway; AMP from adenine: step 1/1. Functionally, catalyzes a salvage reaction resulting in the formation of AMP, that is energically less costly than de novo synthesis. The chain is Adenine phosphoribosyltransferase from Helicobacter pylori (strain ATCC 700392 / 26695) (Campylobacter pylori).